The sequence spans 71 residues: Exodeoxyribonuclease 7 small subunit (71 aa).

Belongs to the XseB family. In terms of assembly, heterooligomer composed of large and small subunits.

It is found in the cytoplasm. It catalyses the reaction Exonucleolytic cleavage in either 5'- to 3'- or 3'- to 5'-direction to yield nucleoside 5'-phosphates.. Bidirectionally degrades single-stranded DNA into large acid-insoluble oligonucleotides, which are then degraded further into small acid-soluble oligonucleotides. The sequence is that of Exodeoxyribonuclease 7 small subunit from Streptococcus suis (strain 98HAH33).